Reading from the N-terminus, the 319-residue chain is Transaldolase (319 aa).

Catalysis depends on Lys-126, which acts as the Schiff-base intermediate with substrate.

It belongs to the transaldolase family. Type 1 subfamily. As to quaternary structure, homodimer.

The protein localises to the cytoplasm. The catalysed reaction is D-sedoheptulose 7-phosphate + D-glyceraldehyde 3-phosphate = D-erythrose 4-phosphate + beta-D-fructose 6-phosphate. It functions in the pathway carbohydrate degradation; pentose phosphate pathway; D-glyceraldehyde 3-phosphate and beta-D-fructose 6-phosphate from D-ribose 5-phosphate and D-xylulose 5-phosphate (non-oxidative stage): step 2/3. Its function is as follows. Transaldolase is important for the balance of metabolites in the pentose-phosphate pathway. The polypeptide is Transaldolase (Bordetella petrii (strain ATCC BAA-461 / DSM 12804 / CCUG 43448)).